The primary structure comprises 107 residues: UPF0145 protein Spro_1658 (107 aa).

This sequence belongs to the UPF0145 family.

The chain is UPF0145 protein Spro_1658 from Serratia proteamaculans (strain 568).